The following is a 243-amino-acid chain: NEDD4-binding protein 2-like 1 (243 aa).

The interval Met1–His38 is disordered.

In terms of assembly, interacts with dynactin subunit proteins, including DCTN4, DCTN5 and DCTN5.

In terms of biological role, might play a role in adipocyte differentiation and triglyceride accumulation. The polypeptide is NEDD4-binding protein 2-like 1 (N4BP2L1) (Homo sapiens (Human)).